A 132-amino-acid polypeptide reads, in one-letter code: Insulin-like 3 (132 aa).

Residues 1–21 form the signal peptide; sequence MDRRPLTWALVLLGPALAIAL. Glutamine 27 carries the pyrrolidone carboxylic acid modification. 3 disulfide bridges follow: cysteine 34/cysteine 117, cysteine 46/cysteine 130, and cysteine 116/cysteine 121. Residues 67 to 104 constitute a propeptide, c peptide like; the sequence is LLRWLEGQHLLHGLMASGDPVLVLAPQPLPQASRHHHH.

It belongs to the insulin family. As to quaternary structure, heterodimer of a B chain and an A chain linked by two disulfide bonds. 20% of B chains include an extra N-terminal pentapeptide. As to expression, expressed exclusively in Leydig cells of the testis.

It is found in the secreted. Functionally, seems to play a role in testicular function. May be a trophic hormone with a role in testicular descent in fetal life. Is a ligand for LGR8 receptor. The chain is Insulin-like 3 (INSL3) from Bos taurus (Bovine).